The chain runs to 505 residues: Megakaryocyte-associated tyrosine-protein kinase (505 aa).

Residues 46–108 (APGTQCMTKC…AAAALRHGEA (63 aa)) form the SH3 domain. One can recognise an SH2 domain in the interval 120–209 (WFHGKISGQE…AICTKLVKPR (90 aa)). The Protein kinase domain maps to 233 to 481 (LTLGAQIGEG…IVEKLGRELR (249 aa)). Residues 239-247 (IGEGEFGAV) and Lys260 contribute to the ATP site. Asp350 serves as the catalytic Proton acceptor. The segment at 483–505 (VGVSAPAGGQEAEGSAPTRSQDP) is disordered.

Belongs to the protein kinase superfamily. Tyr protein kinase family. CSK subfamily. In terms of assembly, interacts with KIT. As to expression, most abundant in brain, and to a lesser extent in the spleen, the thymus and the liver. Also found in the T-cell lineage.

The protein localises to the cytoplasm. It localises to the membrane. It catalyses the reaction L-tyrosyl-[protein] + ATP = O-phospho-L-tyrosyl-[protein] + ADP + H(+). Could play a significant role in the signal transduction of hematopoietic cells. May regulate tyrosine kinase activity of SRC-family members in brain by specifically phosphorylating their C-terminal regulatory tyrosine residue which acts as a negative regulatory site. It may play an inhibitory role in the control of T-cell proliferation. This is Megakaryocyte-associated tyrosine-protein kinase (Matk) from Mus musculus (Mouse).